The primary structure comprises 222 residues: Small ribosomal subunit protein uS2 (222 aa).

The protein belongs to the universal ribosomal protein uS2 family.

The sequence is that of Small ribosomal subunit protein uS2 from Karelsulcia muelleri (strain GWSS) (Sulcia muelleri).